A 66-amino-acid chain; its full sequence is UPF0337 protein SAG0606 (66 aa).

Over residues 1-10 (MSQEKLKSKV) the composition is skewed to basic and acidic residues. The disordered stretch occupies residues 1–23 (MSQEKLKSKVEQASGSLKEGAGK).

Belongs to the UPF0337 (CsbD) family.

The polypeptide is UPF0337 protein SAG0606 (Streptococcus agalactiae serotype V (strain ATCC BAA-611 / 2603 V/R)).